We begin with the raw amino-acid sequence, 309 residues long: Aspartate carbamoyltransferase catalytic subunit (309 aa).

Positions 55 and 56 each coordinate carbamoyl phosphate. Residue lysine 85 coordinates L-aspartate. Carbamoyl phosphate is bound by residues arginine 106, histidine 135, and glutamine 138. L-aspartate contacts are provided by arginine 168 and arginine 230. Carbamoyl phosphate is bound by residues leucine 268 and proline 269.

The protein belongs to the aspartate/ornithine carbamoyltransferase superfamily. ATCase family. Heterododecamer (2C3:3R2) of six catalytic PyrB chains organized as two trimers (C3), and six regulatory PyrI chains organized as three dimers (R2).

It catalyses the reaction carbamoyl phosphate + L-aspartate = N-carbamoyl-L-aspartate + phosphate + H(+). It functions in the pathway pyrimidine metabolism; UMP biosynthesis via de novo pathway; (S)-dihydroorotate from bicarbonate: step 2/3. Catalyzes the condensation of carbamoyl phosphate and aspartate to form carbamoyl aspartate and inorganic phosphate, the committed step in the de novo pyrimidine nucleotide biosynthesis pathway. The chain is Aspartate carbamoyltransferase catalytic subunit from Vibrio vulnificus (strain YJ016).